The following is a 264-amino-acid chain: Glutamate racemase (264 aa).

Substrate is bound by residues 10 to 11 and 42 to 43; these read DS and YG. Cys73 acts as the Proton donor/acceptor in catalysis. Position 74–75 (74–75) interacts with substrate; it reads NT. Cys183 acts as the Proton donor/acceptor in catalysis. 184 to 185 is a binding site for substrate; that stretch reads TH.

The protein belongs to the aspartate/glutamate racemases family.

The enzyme catalyses L-glutamate = D-glutamate. The protein operates within cell wall biogenesis; peptidoglycan biosynthesis. Its function is as follows. Provides the (R)-glutamate required for cell wall biosynthesis. The sequence is that of Glutamate racemase from Streptococcus equi subsp. zooepidemicus (strain H70).